The sequence spans 211 residues: ATP-dependent Clp protease proteolytic subunit (211 aa).

The active-site Nucleophile is S114. H139 is an active-site residue.

Belongs to the peptidase S14 family. In terms of assembly, fourteen ClpP subunits assemble into 2 heptameric rings which stack back to back to give a disk-like structure with a central cavity, resembling the structure of eukaryotic proteasomes.

The protein resides in the cytoplasm. It catalyses the reaction Hydrolysis of proteins to small peptides in the presence of ATP and magnesium. alpha-casein is the usual test substrate. In the absence of ATP, only oligopeptides shorter than five residues are hydrolyzed (such as succinyl-Leu-Tyr-|-NHMec, and Leu-Tyr-Leu-|-Tyr-Trp, in which cleavage of the -Tyr-|-Leu- and -Tyr-|-Trp bonds also occurs).. Functionally, cleaves peptides in various proteins in a process that requires ATP hydrolysis. Has a chymotrypsin-like activity. Plays a major role in the degradation of misfolded proteins. The protein is ATP-dependent Clp protease proteolytic subunit of Pseudomonas fluorescens (strain ATCC BAA-477 / NRRL B-23932 / Pf-5).